A 171-amino-acid chain; its full sequence is Large ribosomal subunit protein uL10 (171 aa).

The protein belongs to the universal ribosomal protein uL10 family. Part of the ribosomal stalk of the 50S ribosomal subunit. The N-terminus interacts with L11 and the large rRNA to form the base of the stalk. The C-terminus forms an elongated spine to which L12 dimers bind in a sequential fashion forming a multimeric L10(L12)X complex.

In terms of biological role, forms part of the ribosomal stalk, playing a central role in the interaction of the ribosome with GTP-bound translation factors. In Corynebacterium diphtheriae (strain ATCC 700971 / NCTC 13129 / Biotype gravis), this protein is Large ribosomal subunit protein uL10.